The following is a 586-amino-acid chain: MKENETLKQIVLKTLEESVNSLISSFPEVEKETFKIKIEYSRDEKFGDYSTSFALENSKLLKRNPIQVSKELVEILQKRTDLFEKVDFTPPGFVNFRISTSFLLNYIETSVLSGNYFPKVDLPLKINLEFVSANPTGPLNIVSARAAANGDTMASLLKAIGHNVDKEFYINDYGNQVFLLGVSTLVRIRELKGEEGTQQETTDDTPIEIILEKNILPAEGYRGEYIKDIASSLLKDPKKNVTIENLLKQKKYKELAELCAVWTIENNLIWQRKDLDAFGVEFDRYFSERTLHEADKVLSVMKDLEKSGKIFQEDGKKVFRSTEYGDDKDRVVVRDDGRPTYLLADIAYHKDKIERGYDKIYDIWGPDHHGYISRLSGAVQSLGYKKENFKVIISQQVNLLESGQKVKMSKRAGSFQTMSDLIGFLGKHGKDVGRYFFVMRSLDAPLDFDLDLAKDESDKNPVFYLQYAHARICSIFKEVGDQTSKEATAILEMSEERKRLLFWIARFPEEIFDSANAMEPHRVTNYLQSFAKAFTSFYLAKDNRLKDASKEVRLGLARICLAAKNVLAEGLKLIGVSAPERMEKEN.

Positions 133–143 (ANPTGPLNIVS) match the 'HIGH' region motif.

This sequence belongs to the class-I aminoacyl-tRNA synthetase family. In terms of assembly, monomer.

The protein localises to the cytoplasm. It carries out the reaction tRNA(Arg) + L-arginine + ATP = L-arginyl-tRNA(Arg) + AMP + diphosphate. The chain is Arginine--tRNA ligase from Leptospira interrogans serogroup Icterohaemorrhagiae serovar Lai (strain 56601).